The chain runs to 630 residues: Telomere repeat-binding protein 5 (630 aa).

Disordered regions lie at residues 1–38, 56–78, and 308–327; these read MVLQ…SENH, EGGN…CAVK, and YTAS…GSPR. The span at 57-71 shows a compositional bias: low complexity; the sequence is GGNSSSSSNNTSGNN. Polar residues predominate over residues 309–325; it reads TASQSEETNKNEGQSGS. In terms of domain architecture, Ubiquitin-like spans 354–433; the sequence is VKLGIKSFRV…SDTLGFCLEP (80 aa). The segment at 463–489 is disordered; the sequence is LPSPGKHAKPSNSVESDLDSKPSAPNR. In terms of domain architecture, HTH myb-type spans 523-582; sequence AQRRIRRPFSVAEVEALVQAVERLGTGRWRDVKLRAFDNAKHRTYVDLKDKWKTLVHTAR. Positions 551 to 578 form a DNA-binding region, H-T-H motif; it reads WRDVKLRAFDNAKHRTYVDLKDKWKTLV.

As to quaternary structure, homodimer. Expressed ubiquitously.

The protein resides in the nucleus. Binds specifically to the plant telomeric double-stranded DNA sequences. At least 6 repeats of telomeric sequences are required for binding. In Arabidopsis thaliana (Mouse-ear cress), this protein is Telomere repeat-binding protein 5 (TRP5).